Here is a 266-residue protein sequence, read N- to C-terminus: Glutamate racemase (266 aa).

Residues 9–10 (DS) and 41–42 (YG) contribute to the substrate site. Catalysis depends on Cys73, which acts as the Proton donor/acceptor. 74-75 (NS) contributes to the substrate binding site. Cys183 functions as the Proton donor/acceptor in the catalytic mechanism. Residue 184-185 (TH) coordinates substrate.

The protein belongs to the aspartate/glutamate racemases family.

The catalysed reaction is L-glutamate = D-glutamate. It participates in cell wall biogenesis; peptidoglycan biosynthesis. Provides the (R)-glutamate required for cell wall biosynthesis. The protein is Glutamate racemase of Shewanella loihica (strain ATCC BAA-1088 / PV-4).